We begin with the raw amino-acid sequence, 246 residues long: Flagellar brake protein YcgR (246 aa).

A PilZ domain is found at lysine 128–isoleucine 232.

The protein belongs to the YcgR family. Monomer. Interacts with the flagellar basal bodies.

Its subcellular location is the bacterial flagellum basal body. Its function is as follows. Acts as a flagellar brake, regulating swimming and swarming in a bis-(3'-5') cyclic diguanylic acid (c-di-GMP)-dependent manner. Binds 1 c-di-GMP dimer per subunit. Increasing levels of c-di-GMP lead to decreased motility. This Thioalkalivibrio sulfidiphilus (strain HL-EbGR7) protein is Flagellar brake protein YcgR.